Reading from the N-terminus, the 92-residue chain is Acyl-CoA-binding protein (92 aa).

The 86-residue stretch at 3 to 88 folds into the ACB domain; that stretch reads LKEDFEEHAE…VKQLLEAEAS (86 aa). Residues 30–34, Lys56, and Tyr75 contribute to the an acyl-CoA site; that span reads YGLYK.

This sequence belongs to the ACBP family.

Its function is as follows. Binds medium- and long-chain acyl-CoA esters with very high affinity and may function as an intracellular carrier of acyl-CoA esters. The polypeptide is Acyl-CoA-binding protein (Brassica napus (Rape)).